A 306-amino-acid polypeptide reads, in one-letter code: Glutathione transport system permease protein GsiC (306 aa).

Topologically, residues 1-8 (MLNYVIKR) are cytoplasmic. Residues 9–29 (LLGLIPTLFIVSVLVFLFVHM) form a helical membrane-spanning segment. Over 30-102 (LPGDPARLIA…SRFMPTLWLT (73 aa)) the chain is Periplasmic. The ABC transmembrane type-1 domain maps to 95–292 (FMPTLWLTIT…LEFILINLVV (198 aa)). The helical transmembrane segment at 103–123 (ITSMVWAVIFGMAAGIIAAVW) threads the bilayer. Over 124–134 (RNRWPDRLSMT) the chain is Cytoplasmic. A helical transmembrane segment spans residues 135-155 (IAVSGISFPAFALGMLLIQVF). Over 156–168 (SVELGWLPTVGAD) the chain is Periplasmic. The helical transmembrane segment at 169-189 (SWQHYILSSLTLGAAVAAVMA) threads the bilayer. Over 190–228 (RFTRASFVDVLSEDYMRTARAKGVSETWVVLKHGLRNAM) the chain is Cytoplasmic. The chain crosses the membrane as a helical span at residues 229-249 (IPVVTMMGLQFGFLLGGSIVV). At 250 to 277 (EKVFNWPGLGRLLVDSVEMRDYPVIQAE) the chain is on the periplasmic side. Residues 278-298 (ILLFSLEFILINLVVDVLYAA) traverse the membrane as a helical segment. Residues 299–306 (INPAIRYK) are Cytoplasmic-facing.

This sequence belongs to the binding-protein-dependent transport system permease family. The complex is composed of two ATP-binding proteins (GsiA), two transmembrane proteins (GsiC and GsiD) and a solute-binding protein (GsiB).

The protein localises to the cell inner membrane. Functionally, part of the ABC transporter complex GsiABCD involved in glutathione import. Probably responsible for the translocation of the substrate across the membrane. The chain is Glutathione transport system permease protein GsiC from Shigella boydii serotype 4 (strain Sb227).